The sequence spans 303 residues: Uridine diphosphate glucose pyrophosphatase NUDT22 (303 aa).

Substrate-binding residues include Phe56, Tyr87, Arg139, Ala144, Asp151, His156, and Glu158. The region spanning 118-285 (ADPLGVGAAL…KGAIILYNRV (168 aa)) is the Nudix hydrolase domain. Residues 148–168 (GLVDVPGGHPEPQALCPGGSP) form a disordered region. A Nudix box motif is present at residues 175 to 196 (GQLVVHELFSSVLQEICDEVNL). Residues Glu189 and Glu193 each contribute to the Mg(2+) site. Ser274 contacts substrate.

This sequence belongs to the Nudix hydrolase family. It depends on Mg(2+) as a cofactor.

It carries out the reaction UDP-sugar + H2O = UMP + alpha-D-aldose 1-phosphate.. Functionally, hydrolyzes UDP-glucose to glucose 1-phosphate and UMP and UDP-galactose to galactose 1-phosphate and UMP. Preferred substrate is UDP-glucose. In Homo sapiens (Human), this protein is Uridine diphosphate glucose pyrophosphatase NUDT22 (NUDT22).